A 169-amino-acid polypeptide reads, in one-letter code: Large ribosomal subunit protein uL18 (169 aa).

It belongs to the universal ribosomal protein uL18 family. In terms of assembly, part of the 50S ribosomal subunit. Contacts the 5S and 23S rRNAs.

In terms of biological role, this is one of the proteins that bind and probably mediate the attachment of the 5S RNA into the large ribosomal subunit, where it forms part of the central protuberance. The protein is Large ribosomal subunit protein uL18 of Methanothrix thermoacetophila (strain DSM 6194 / JCM 14653 / NBRC 101360 / PT) (Methanosaeta thermophila).